The chain runs to 202 residues: MVRGKVQMRRIENPVHRQVTFCKRRGGLLKKARELSVLCDADVGVIIFSSQGKLHELATNGNMHNLVERYQSNVAGGQMEPGALQRQQVAEQGIFLLREEIDLLQRGLRSTYGGGAGEMTLDKLHALEKGLELWIYQIRTTKMQMMQQEIQFLRNKEGILKEANEMLQEKVKEQQKLYMSLLDLHSQQPTQPMTYGNRFFSI.

The region spanning 1 to 61 is the MADS-box domain; that stretch reads MVRGKVQMRR…GKLHELATNG (61 aa). The K-box domain maps to 87–177; that stretch reads QQVAEQGIFL…QEKVKEQQKL (91 aa).

As to expression, expressed in seedling roots.

Its subcellular location is the nucleus. Probable transcription factor. The protein is MADS-box transcription factor 33 (MADS33) of Oryza sativa subsp. japonica (Rice).